Reading from the N-terminus, the 465-residue chain is Putative F-box/FBD/LRR-repeat protein At1g22000 (465 aa).

The F-box domain maps to 28–74 (ETRICALPDDLLLQILPHVPTKEAVATSILSKQWRYVWLMLPKLEFK). LRR repeat units follow at residues 154-181 (CLTL…SLHY), 182-207 (VVYK…SVHS), 210-230 (DDNL…NYDE), 248-273 (NEVE…HLSE), and 339-365 (ISLV…TIDN). An FBD domain is found at 373–424 (SWNQPSSIPGCLLSHLETFRWRGYGGREDAKKLLMTYILANSKCLKTVEISL).

The polypeptide is Putative F-box/FBD/LRR-repeat protein At1g22000 (Arabidopsis thaliana (Mouse-ear cress)).